Consider the following 183-residue polypeptide: Neuroblastoma suppressor of tumorigenicity 1 (183 aa).

Positions 1–19 are cleaved as a signal peptide; sequence MVMCVRAVLVCVLLELSRA. Intrachain disulfides connect Cys38/Cys88, Cys52/Cys102, Cys62/Cys121, Cys66/Cys123, and Cys85/Cys126. The CTCK domain occupies 38–127; that stretch reads CEAKNITQIV…ILHCSCQSCS (90 aa). The tract at residues 145–170 is disordered; it reads AQDLPSLPDATHTHPQHAHMQADQRD.

It belongs to the DAN family.

It is found in the secreted. Its function is as follows. May act as a tumor suppressor. The chain is Neuroblastoma suppressor of tumorigenicity 1 (nbl1) from Danio rerio (Zebrafish).